The following is a 61-amino-acid chain: Progonadoliberin-1 (61 aa).

Q1 is modified (pyrrolidone carboxylic acid). G10 bears the Glycine amide mark.

It belongs to the GnRH family.

The protein resides in the secreted. Functionally, stimulates the secretion of gonadotropins; it stimulates the secretion of both luteinizing and follicle-stimulating hormones. The polypeptide is Progonadoliberin-1 (GNRH1) (Ovis aries (Sheep)).